Here is a 375-residue protein sequence, read N- to C-terminus: 23S rRNA (uracil(747)-C(5))-methyltransferase RlmC (375 aa).

[4Fe-4S] cluster contacts are provided by C3, C11, C14, and C87. Residues Q212, F241, E262, and N307 each coordinate S-adenosyl-L-methionine. C334 acts as the Nucleophile in catalysis.

This sequence belongs to the class I-like SAM-binding methyltransferase superfamily. RNA M5U methyltransferase family. RlmC subfamily.

It carries out the reaction uridine(747) in 23S rRNA + S-adenosyl-L-methionine = 5-methyluridine(747) in 23S rRNA + S-adenosyl-L-homocysteine + H(+). Catalyzes the formation of 5-methyl-uridine at position 747 (m5U747) in 23S rRNA. This is 23S rRNA (uracil(747)-C(5))-methyltransferase RlmC from Escherichia coli O127:H6 (strain E2348/69 / EPEC).